A 349-amino-acid polypeptide reads, in one-letter code: MQQDGLSSVNQLGGLFVNGRPLPLDTRQQIVQLAIRGMRPCDISRSLKVSNGCVSKILGRYYRTGVLEPKGIGGSKPRLATPAVVARIAQLKDEYPALFAWEIQRQLCAEGLCTQDKAPSVSSINRVLRALQEDQRLHWTQLRSPAVLAPALPSPHSNCEAPRGPHPGTSHRNRTIFSPGQAEALEKEFQRGQYPDSVVRGKLAAATSLPEDTVRVWFSNRRAKWRRQEKLKWETQMPGASQDLMVPKDSPGIISAQQSPGSVPSAALPVLEQLNPSFCQLCWGAVPDRCSSDTTSQACLQPYWECHSLLPVASSSYMEFAWPCLTTHPVHHLIGGPGQAPSTYYLHWP.

The segment at residues 5–131 (GLSSVNQLGG…SSINRVLRAL (127 aa)) is a DNA-binding region (paired). The interval 8–64 (SVNQLGGLFVNGRPLPLDTRQQIVQLAIRGMRPCDISRSLKVSNGCVSKILGRYYRT) is PAI subdomain. Residues 83-131 (AVVARIAQLKDEYPALFAWEIQRQLCAEGLCTQDKAPSVSSINRVLRAL) are RED subdomain. Residues 170 to 229 (SHRNRTIFSPGQAEALEKEFQRGQYPDSVVRGKLAAATSLPEDTVRVWFSNRRAKWRRQE) constitute a DNA-binding region (homeobox). The segment at 278-349 (FCQLCWGAVP…APSTYYLHWP (72 aa)) is transcription repression.

The protein belongs to the paired homeobox family. As to expression, specifically expressed in pancreatic islets.

It localises to the nucleus. Functionally, plays an important role in the differentiation and development of pancreatic islet beta cells. Transcriptional repressor that competes with PAX6 in binding to a common element in the glucagon, insulin and somatostatin promoters. In Rattus norvegicus (Rat), this protein is Paired box protein Pax-4 (Pax4).